Reading from the N-terminus, the 557-residue chain is Protein Red (557 aa).

Residues 1–90 (MPERDSEPFS…YAKLRQQEIE (90 aa)) are disordered. Residues 16–25 (DGHDVDDPHS) show a composition bias toward basic and acidic residues. The span at 42-53 (TPRAAPTSAPPS) shows a compositional bias: low complexity. An N6-acetyllysine mark is found at Lys98 and Lys137. Lys151 is covalently cross-linked (Glycyl lysine isopeptide (Lys-Gly) (interchain with G-Cter in SUMO2)). Residues 181–205 (KEKEEEELMEKPQKETKKDEDPENK) are disordered. Ser287 carries the post-translational modification Phosphoserine. Over residues 294 to 303 (RNKKLKKKDK) the composition is skewed to basic residues. Residues 294-402 (RNKKLKKKDK…PMDVDKGPGS (109 aa)) form a disordered region. Positions 304–313 (GKLEEKKPPE) are enriched in basic and acidic residues. Residues Lys310 and Lys331 each participate in a glycyl lysine isopeptide (Lys-Gly) (interchain with G-Cter in SUMO2) cross-link. Basic and acidic residues predominate over residues 332-398 (TPRDKERERY…VDDEPMDVDK (67 aa)). 17 consecutive repeat copies span residues 342–343 (RE), 344–345 (RE), 346–347 (RD), 348–349 (RE), 350–351 (RD), 352–353 (RD), 354–355 (RE), 356–357 (RD), 358–359 (RE), 360–361 (RD), 362–363 (RE), 364–365 (RE), 366–367 (RE), 368–369 (RD), 370–371 (RE), 372–373 (RE), and 374–375 (RE). Residues 342-375 (RERERDRERDRDRERDRERDRERERERDRERERE) are 17 X 2 AA tandem repeats of R-[ED]. Glycyl lysine isopeptide (Lys-Gly) (interchain with G-Cter in SUMO2) cross-links involve residues Lys386, Lys388, Lys404, and Lys408. Ser417 and Ser460 each carry phosphoserine. At Thr485 the chain carries Phosphothreonine. Glycyl lysine isopeptide (Lys-Gly) (interchain with G-Cter in SUMO2) cross-links involve residues Lys496, Lys501, and Lys509. Position 536 is a phosphoserine (Ser536). Residues Lys541, Lys543, and Lys553 each participate in a glycyl lysine isopeptide (Lys-Gly) (interchain with G-Cter in SUMO2) cross-link.

Belongs to the RED family. As to quaternary structure, component of the spliceosome B complex. Interacts with SMU1. Interacts with MAD1L1. May interact with DHX15. In terms of tissue distribution, ubiquitous.

Its subcellular location is the nucleus. It is found in the nucleoplasm. It localises to the chromosome. The protein localises to the cytoplasm. The protein resides in the cytoskeleton. Its subcellular location is the spindle pole. Its function is as follows. Involved in pre-mRNA splicing as a component of the spliceosome. Auxiliary spliceosomal protein that regulates selection of alternative splice sites in a small set of target pre-mRNA species. Required for normal mitotic cell cycle progression. Recruits MAD1L1 and MAD2L1 to kinetochores, and is required to trigger the spindle assembly checkpoint. Required for normal accumulation of SMU1. The sequence is that of Protein Red (Ik) from Mus musculus (Mouse).